The following is a 440-amino-acid chain: Endoplasmic reticulum junction formation protein lunapark (440 aa).

Residues 1–45 (MGALLAKWRAKPSTVEVLEKMEKDIQSLEEFRDKNQKLRKIWVAR) are Cytoplasmic-facing. Residues 16–40 (EVLEKMEKDIQSLEEFRDKNQKLRK) adopt a coiled-coil conformation. Residues 46–66 (LFFYSTILYILTSLTVYLWYL) form a helical membrane-spanning segment. The Lumenal portion of the chain corresponds to 67 to 77 (PGGMTARLLTT). Residues 78 to 98 (LLFLLFPVLIWFVRTLLILWF) traverse the membrane as a helical segment. The Cytoplasmic portion of the chain corresponds to 99 to 440 (SRRTERNNDA…ESEESFMETE (342 aa)). Residues 100-128 (RRTERNNDALELLKAEKKKILEEVMEKET) adopt a coiled-coil conformation. The segment at 149 to 169 (LELPVPGPPITPRPGQDLRQR) is disordered. T159 bears the Phosphothreonine mark. Phosphoserine is present on residues S177, S179, S188, and S192. T198 is subject to Phosphothreonine. The segment at 202–247 (QRDTSAPGGPPERSVQPTPQSNILQRRPGSPATAVSGMALHPPGPP) is disordered. Residues S206 and S215 each carry the phosphoserine modification. Positions 216–225 (VQPTPQSNIL) are enriched in polar residues. T219 carries the phosphothreonine modification. Residues S222 and S231 each carry the phosphoserine modification. The C4-type; plays a role in ER morphology zinc finger occupies 280 to 305 (CQQCFSHNGMALKEEFEYVAFRCAYC). The disordered stretch occupies residues 316–440 (PQAPRLQEIS…ESEESFMETE (125 aa)). Phosphoserine is present on S325. Residues 334 to 343 (DSQGSVNTLQ) show a composition bias toward polar residues. 2 stretches are compositionally biased toward acidic residues: residues 370–411 (QAIE…DDTE) and 431–440 (ESEESFMETE).

It belongs to the lunapark family. Homodimer; homodimerization requires the C4-type zinc finger motif and decreases during mitosis in a phosphorylation-dependent manner. Post-translationally, phosphorylated. Phosphorylation at Thr-159 and Ser-325 occurs during interphase. Phosphorylation at Ser-177, Ser-179, Ser-188, Ser-192, Thr-198, Ser-206, Ser-215, Thr-219, Ser-222 and Ser-231 occurs during mitosis; these phosphorylations reduce both its homodimerization and the ER three-way tubular junction formation.

The protein localises to the endoplasmic reticulum membrane. In terms of biological role, endoplasmic reticulum (ER)-shaping membrane protein that plays a role in determining ER morphology. Involved in the stabilization of nascent three-way ER tubular junctions within the ER network. May also play a role as a curvature-stabilizing protein within three-way ER tubular junction network. The polypeptide is Endoplasmic reticulum junction formation protein lunapark (lnpk) (Xenopus laevis (African clawed frog)).